The sequence spans 245 residues: Ubiquinone biosynthesis O-methyltransferase (245 aa).

The S-adenosyl-L-methionine site is built by Arg-49, Gly-69, Asp-90, and Met-134.

Belongs to the methyltransferase superfamily. UbiG/COQ3 family.

The enzyme catalyses a 3-demethylubiquinol + S-adenosyl-L-methionine = a ubiquinol + S-adenosyl-L-homocysteine + H(+). The catalysed reaction is a 3-(all-trans-polyprenyl)benzene-1,2-diol + S-adenosyl-L-methionine = a 2-methoxy-6-(all-trans-polyprenyl)phenol + S-adenosyl-L-homocysteine + H(+). It participates in cofactor biosynthesis; ubiquinone biosynthesis. Functionally, O-methyltransferase that catalyzes the 2 O-methylation steps in the ubiquinone biosynthetic pathway. The chain is Ubiquinone biosynthesis O-methyltransferase from Vibrio cholerae serotype O1 (strain ATCC 39541 / Classical Ogawa 395 / O395).